The chain runs to 198 residues: Probable chorismate pyruvate-lyase (198 aa).

Arginine 73, leucine 111, and glutamate 172 together coordinate substrate.

This sequence belongs to the UbiC family.

It is found in the cytoplasm. The enzyme catalyses chorismate = 4-hydroxybenzoate + pyruvate. The protein operates within cofactor biosynthesis; ubiquinone biosynthesis. Removes the pyruvyl group from chorismate, with concomitant aromatization of the ring, to provide 4-hydroxybenzoate (4HB) for the ubiquinone pathway. This chain is Probable chorismate pyruvate-lyase, found in Burkholderia orbicola (strain AU 1054).